An 86-amino-acid polypeptide reads, in one-letter code: MKNLIAELLLKLAQKEEESKELCAQVEALEIIVTAMLRNMAQNDQQRLIEQVDGALYEVKPDASIPDDDTELLRNYVKKLLKHPRQ.

Residues 1–36 (MKNLIAELLLKLAQKEEESKELCAQVEALEIIVTAM) are a coiled coil.

It belongs to the IraP family. In terms of assembly, interacts with RssB.

It localises to the cytoplasm. Its function is as follows. Inhibits RpoS proteolysis by regulating RssB activity, thereby increasing the stability of the sigma stress factor RpoS especially during phosphate starvation, but also in stationary phase and during nitrogen starvation. Its effect on RpoS stability is due to its interaction with RssB, which probably blocks the interaction of RssB with RpoS, and the consequent delivery of the RssB-RpoS complex to the ClpXP protein degradation pathway. This Shigella boydii serotype 18 (strain CDC 3083-94 / BS512) protein is Anti-adapter protein IraP.